A 727-amino-acid chain; its full sequence is Catalase-peroxidase (727 aa).

The tract at residues 1 to 26 is disordered; it reads MSDEKKCPVTGRTSSQVAGSGTSNKD. Residues 11–26 show a composition bias toward polar residues; that stretch reads GRTSSQVAGSGTSNKD. A cross-link (tryptophyl-tyrosyl-methioninium (Trp-Tyr) (with M-245)) is located at residues 96 to 219; that stretch reads WHSAGTYRIG…LAAVQMGLIY (124 aa). The Proton acceptor role is filled by His-97. Residues 219-245 constitute a cross-link (tryptophyl-tyrosyl-methioninium (Tyr-Met) (with W-96)); sequence YVNPEGPNGDPNAVASGKDVRETFARM. Residue His-260 coordinates heme b. The span at 346–362 shows a compositional bias: basic and acidic residues; that stretch reads SDPEAKKAVPDAHDPSK. The segment at 346–365 is disordered; sequence SDPEAKKAVPDAHDPSKTHP.

The protein belongs to the peroxidase family. Peroxidase/catalase subfamily. Homodimer or homotetramer. Requires heme b as cofactor. In terms of processing, formation of the three residue Trp-Tyr-Met cross-link is important for the catalase, but not the peroxidase activity of the enzyme.

The catalysed reaction is H2O2 + AH2 = A + 2 H2O. It catalyses the reaction 2 H2O2 = O2 + 2 H2O. In terms of biological role, bifunctional enzyme with both catalase and broad-spectrum peroxidase activity. This Maridesulfovibrio salexigens (strain ATCC 14822 / DSM 2638 / NCIMB 8403 / VKM B-1763) (Desulfovibrio salexigens) protein is Catalase-peroxidase.